Consider the following 206-residue polypeptide: Protein GrpE (206 aa).

A compositionally biased stretch (polar residues) spans 1–15 (MTDSNGQKDNNQDQA). Residues 1–38 (MTDSNGQKDNNQDQAQPADPVVSKPYIMPDDPEEGTNE) form a disordered region.

The protein belongs to the GrpE family. As to quaternary structure, homodimer.

The protein resides in the cytoplasm. Functionally, participates actively in the response to hyperosmotic and heat shock by preventing the aggregation of stress-denatured proteins, in association with DnaK and GrpE. It is the nucleotide exchange factor for DnaK and may function as a thermosensor. Unfolded proteins bind initially to DnaJ; upon interaction with the DnaJ-bound protein, DnaK hydrolyzes its bound ATP, resulting in the formation of a stable complex. GrpE releases ADP from DnaK; ATP binding to DnaK triggers the release of the substrate protein, thus completing the reaction cycle. Several rounds of ATP-dependent interactions between DnaJ, DnaK and GrpE are required for fully efficient folding. In Rhodopseudomonas palustris (strain BisB5), this protein is Protein GrpE.